The following is a 278-amino-acid chain: Probable endonuclease 4 (278 aa).

9 residues coordinate Zn(2+): His-66, His-106, Glu-140, Asp-172, His-175, His-209, Asp-222, His-224, and Glu-254.

Belongs to the AP endonuclease 2 family. It depends on Zn(2+) as a cofactor.

The enzyme catalyses Endonucleolytic cleavage to 5'-phosphooligonucleotide end-products.. Its function is as follows. Endonuclease IV plays a role in DNA repair. It cleaves phosphodiester bonds at apurinic or apyrimidinic (AP) sites, generating a 3'-hydroxyl group and a 5'-terminal sugar phosphate. The chain is Probable endonuclease 4 from Haloquadratum walsbyi (strain DSM 16790 / HBSQ001).